The following is a 596-amino-acid chain: Putative terpene synthase 2, chloroplastic (596 aa).

The transit peptide at M1–S46 directs the protein to the chloroplast. Mn(2+)-binding residues include D349 and D353. The DDXXD motif signature appears at D349–D353. 2 homodimerization regions span residues Y355–L361 and E427–P464. Residues D493 and E501 each coordinate Mn(2+).

The protein belongs to the terpene synthase family. Homodimer. Requires Mn(2+) as cofactor. It depends on Mg(2+) as a cofactor.

The protein resides in the plastid. It is found in the chloroplast. It participates in secondary metabolite biosynthesis; terpenoid biosynthesis. In terms of biological role, putative monoterpene synthase inactive on geranyl diphosphate (GPP). This is Putative terpene synthase 2, chloroplastic from Thymus vulgaris (Thyme).